The following is a 172-amino-acid chain: Protein/nucleic acid deglycase 2 (172 aa).

The region spanning 3 to 171 (KKIAVLITDE…FNREALRLLG (169 aa)) is the PfpI endopeptidase domain. The active-site Nucleophile is the Cys-104.

The protein belongs to the peptidase C56 family. In terms of assembly, exists in monomeric, trimeric, and hexameric forms.

It is found in the cytoplasm. The enzyme catalyses N(omega)-(1-hydroxy-2-oxopropyl)-L-arginyl-[protein] + H2O = lactate + L-arginyl-[protein] + H(+). It carries out the reaction N(6)-(1-hydroxy-2-oxopropyl)-L-lysyl-[protein] + H2O = lactate + L-lysyl-[protein] + H(+). It catalyses the reaction S-(1-hydroxy-2-oxopropyl)-L-cysteinyl-[protein] + H2O = lactate + L-cysteinyl-[protein] + H(+). The catalysed reaction is N(omega)-(1-hydroxy-2-oxoethyl)-L-arginyl-[protein] + H2O = L-arginyl-[protein] + glycolate + H(+). The enzyme catalyses N(6)-(1-hydroxy-2-oxoethyl)-L-lysyl-[protein] + H2O = glycolate + L-lysyl-[protein] + H(+). It carries out the reaction S-(1-hydroxy-2-oxoethyl)-L-cysteinyl-[protein] + H2O = glycolate + L-cysteinyl-[protein] + H(+). It catalyses the reaction N(2)-(1-hydroxy-2-oxopropyl)-dGTP + H2O = lactate + dGTP + H(+). The catalysed reaction is N(2)-(1-hydroxy-2-oxopropyl)-GTP + H2O = lactate + GTP + H(+). The enzyme catalyses N(2)-(1-hydroxy-2-oxopropyl)-GDP + H2O = lactate + GDP + H(+). It carries out the reaction N(2)-(1-hydroxy-2-oxopropyl)-GMP + H2O = lactate + GMP + H(+). It catalyses the reaction N(2)-(1-hydroxy-2-oxoethyl)-dGTP + H2O = dGTP + glycolate + H(+). The catalysed reaction is N(2)-(1-hydroxy-2-oxoethyl)-GTP + H2O = glycolate + GTP + H(+). The enzyme catalyses N(2)-(1-hydroxy-2-oxoethyl)-GDP + H2O = glycolate + GDP + H(+). It carries out the reaction N(2)-(1-hydroxy-2-oxoethyl)-GMP + H2O = glycolate + GMP + H(+). It catalyses the reaction an N(2)-(1-hydroxy-2-oxopropyl)-guanosine in RNA + H2O = a guanosine in RNA + lactate + H(+). The catalysed reaction is an N(2)-(1-hydroxy-2-oxopropyl)-2'-deoxyguanosine in DNA + H2O = a 2'-deoxyguanosine in DNA + lactate + H(+). The enzyme catalyses an N(2)-(1-hydroxy-2-oxoethyl)-guanosine in RNA + H2O = a guanosine in RNA + glycolate + H(+). It carries out the reaction an N(2)-(1-hydroxy-2-oxoethyl)-2'-deoxyguanosine in DNA + H2O = a 2'-deoxyguanosine in DNA + glycolate + H(+). With respect to regulation, glyoxalase activity is inhibited by zinc ions at pH 7.0. Functionally, protein and nucleotide deglycase that catalyzes the deglycation of the Maillard adducts formed between amino groups of proteins or nucleotides and reactive carbonyl groups of glyoxals. Thus, functions as a protein deglycase that repairs methylglyoxal- and glyoxal-glycated proteins, and releases repaired proteins and lactate or glycolate, respectively. Deglycates cysteine, arginine and lysine residues in proteins, and thus reactivates these proteins by reversing glycation by glyoxals. Is able to repair glycated serum albumin, collagen, glyceraldehyde-3-phosphate dehydrogenase, and fructose biphosphate aldolase. Acts on early glycation intermediates (hemithioacetals and aminocarbinols), preventing the formation of advanced glycation endproducts (AGE) that cause irreversible damage. Also functions as a nucleotide deglycase able to repair glycated guanine in the free nucleotide pool (GTP, GDP, GMP, dGTP) and in DNA and RNA. Is thus involved in a major nucleotide repair system named guanine glycation repair (GG repair), dedicated to reversing methylglyoxal and glyoxal damage via nucleotide sanitization and direct nucleic acid repair. In vitro, prevents acrylamide formation in asparagine/glyoxal and asparagine/sugar mixtures at 55 degrees Celsius, likely by degrading asparagine/glyoxal Maillard adducts formed at high temperatures. Also displays an apparent glyoxalase activity that in fact reflects its deglycase activity. Is a general stress protein; is required for the protection of bacterial cells against many environmental stresses, including oxidative, thermal, osmotic, UV, and pH stresses. And plays an important role in protection against electrophile/carbonyl stress. This is Protein/nucleic acid deglycase 2 (yhbO) from Escherichia coli (strain K12).